Here is a 172-residue protein sequence, read N- to C-terminus: ATP synthase subunit b (172 aa).

The chain crosses the membrane as a helical span at residues 12–32 (VGFNAGTMLFQLVAMLILLAL).

The protein belongs to the ATPase B chain family. As to quaternary structure, F-type ATPases have 2 components, F(1) - the catalytic core - and F(0) - the membrane proton channel. F(1) has five subunits: alpha(3), beta(3), gamma(1), delta(1), epsilon(1). F(0) has three main subunits: a(1), b(2) and c(10-14). The alpha and beta chains form an alternating ring which encloses part of the gamma chain. F(1) is attached to F(0) by a central stalk formed by the gamma and epsilon chains, while a peripheral stalk is formed by the delta and b chains.

The protein resides in the cell membrane. F(1)F(0) ATP synthase produces ATP from ADP in the presence of a proton or sodium gradient. F-type ATPases consist of two structural domains, F(1) containing the extramembraneous catalytic core and F(0) containing the membrane proton channel, linked together by a central stalk and a peripheral stalk. During catalysis, ATP synthesis in the catalytic domain of F(1) is coupled via a rotary mechanism of the central stalk subunits to proton translocation. Its function is as follows. Component of the F(0) channel, it forms part of the peripheral stalk, linking F(1) to F(0). The protein is ATP synthase subunit b of Bacillus licheniformis (strain ATCC 14580 / DSM 13 / JCM 2505 / CCUG 7422 / NBRC 12200 / NCIMB 9375 / NCTC 10341 / NRRL NRS-1264 / Gibson 46).